The chain runs to 139 residues: Immunogenic miracidial antigen 8I (139 aa).

The interval 61 to 139 (IDVGDEDYHD…PKKYGSGYKH (79 aa)) is disordered. The segment covering 64 to 85 (GDEDYHDGDDDVDYTDDVDDVD) has biased composition (acidic residues). The segment covering 90-103 (SPSQLLQGGYQRNQ) has biased composition (polar residues).

Belongs to the immunogenic miracidial antigen family.

This Schistosoma japonicum (Blood fluke) protein is Immunogenic miracidial antigen 8I (8I).